Reading from the N-terminus, the 276-residue chain is Homeobox protein TOS8 (276 aa).

Polar residues predominate over residues 176-185; that stretch reads NSVRGSNNGY. A disordered region spans residues 176–199; it reads NSVRGSNNGYSAKEKKHKAHGKRS. Positions 189 to 199 are enriched in basic residues; sequence EKKHKAHGKRS. The segment at residues 194-256 is a DNA-binding region (homeobox; TALE-type); sequence AHGKRSNLPK…NARRRKIFSG (63 aa).

The protein belongs to the TALE/CUP9 homeobox family.

Its subcellular location is the nucleus. This chain is Homeobox protein TOS8 (TOS8), found in Saccharomyces cerevisiae (strain ATCC 204508 / S288c) (Baker's yeast).